A 308-amino-acid chain; its full sequence is Oxygen-dependent coproporphyrinogen-III oxidase (308 aa).

Ser-100 is a substrate binding site. Residues His-104 and His-114 each coordinate a divalent metal cation. His-114 acts as the Proton donor in catalysis. A substrate-binding site is contributed by 116–118 (NFR). Residues His-153 and His-183 each contribute to the a divalent metal cation site. The important for dimerization stretch occupies residues 248 to 283 (YVEFNLVFDRGTIFGLQSGGRTESILSSMPPIATWK). 266-268 (GGR) is a substrate binding site.

The protein belongs to the aerobic coproporphyrinogen-III oxidase family. In terms of assembly, homodimer. The cofactor is a divalent metal cation.

The protein resides in the cytoplasm. It carries out the reaction coproporphyrinogen III + O2 + 2 H(+) = protoporphyrinogen IX + 2 CO2 + 2 H2O. The protein operates within porphyrin-containing compound metabolism; protoporphyrin-IX biosynthesis; protoporphyrinogen-IX from coproporphyrinogen-III (O2 route): step 1/1. Involved in the heme biosynthesis. Catalyzes the aerobic oxidative decarboxylation of propionate groups of rings A and B of coproporphyrinogen-III to yield the vinyl groups in protoporphyrinogen-IX. The polypeptide is Oxygen-dependent coproporphyrinogen-III oxidase (Francisella tularensis subsp. tularensis (strain FSC 198)).